Here is a 231-residue protein sequence, read N- to C-terminus: Adenosylcobinamide-GDP ribazoletransferase (231 aa).

6 helical membrane passes run 24–44 (LWAFPLVALVSSALPTLILYL), 46–66 (LPLSNLLAVLALYWTIGLLHL), 96–116 (IAGLFAVVIVLLLQVYSLQLL), 159–176 (LALGTLLYVLLGLSVVLF), 181–198 (LAGILGLLFGVHIIRISL), and 209–229 (LGATAEITRAGTLVVMALVWW).

Belongs to the CobS family. Mg(2+) serves as cofactor.

The protein resides in the cell membrane. It catalyses the reaction alpha-ribazole + adenosylcob(III)inamide-GDP = adenosylcob(III)alamin + GMP + H(+). It carries out the reaction alpha-ribazole 5'-phosphate + adenosylcob(III)inamide-GDP = adenosylcob(III)alamin 5'-phosphate + GMP + H(+). It participates in cofactor biosynthesis; adenosylcobalamin biosynthesis; adenosylcobalamin from cob(II)yrinate a,c-diamide: step 7/7. In terms of biological role, joins adenosylcobinamide-GDP and alpha-ribazole to generate adenosylcobalamin (Ado-cobalamin). Also synthesizes adenosylcobalamin 5'-phosphate from adenosylcobinamide-GDP and alpha-ribazole 5'-phosphate. The chain is Adenosylcobinamide-GDP ribazoletransferase from Thermococcus kodakarensis (strain ATCC BAA-918 / JCM 12380 / KOD1) (Pyrococcus kodakaraensis (strain KOD1)).